A 69-amino-acid polypeptide reads, in one-letter code: Cytoinsectotoxin-2a (69 aa).

The protein belongs to the cationic peptide 06 (cytoinsectotoxin) family. Expressed by the venom gland.

Its subcellular location is the secreted. In terms of biological role, insecticidal and antimicrobial peptide. Has insecticidal activity against larvae of flesh fly S.carnaria. Has antibacterial activity against Gram-positive bacterium B.subtilis B-501 (MIC=1.25 uM) and Gram-negative bacterium E.coli DH5alpha (MIC=2.5 uM). This is Cytoinsectotoxin-2a from Lachesana tarabaevi (Spider).